Reading from the N-terminus, the 342-residue chain is Ribosomal RNA small subunit methyltransferase C (342 aa).

Belongs to the methyltransferase superfamily. RsmC family. Monomer.

Its subcellular location is the cytoplasm. It carries out the reaction guanosine(1207) in 16S rRNA + S-adenosyl-L-methionine = N(2)-methylguanosine(1207) in 16S rRNA + S-adenosyl-L-homocysteine + H(+). In terms of biological role, specifically methylates the guanine in position 1207 of 16S rRNA in the 30S particle. The sequence is that of Ribosomal RNA small subunit methyltransferase C from Salmonella newport (strain SL254).